A 272-amino-acid polypeptide reads, in one-letter code: Shikimate dehydrogenase (NADP(+)) (272 aa).

Residues 14–16 (SKS) and Thr61 each bind shikimate. Lys65 functions as the Proton acceptor in the catalytic mechanism. Glu77 lines the NADP(+) pocket. Asn86 and Asp102 together coordinate shikimate. NADP(+)-binding positions include 126–130 (GAGGA), 149–154 (NRTVSR), and Met213. Residue Tyr215 participates in shikimate binding. Gly237 lines the NADP(+) pocket.

This sequence belongs to the shikimate dehydrogenase family. In terms of assembly, homodimer.

The enzyme catalyses shikimate + NADP(+) = 3-dehydroshikimate + NADPH + H(+). The protein operates within metabolic intermediate biosynthesis; chorismate biosynthesis; chorismate from D-erythrose 4-phosphate and phosphoenolpyruvate: step 4/7. Functionally, involved in the biosynthesis of the chorismate, which leads to the biosynthesis of aromatic amino acids. Catalyzes the reversible NADPH linked reduction of 3-dehydroshikimate (DHSA) to yield shikimate (SA). In Escherichia coli O7:K1 (strain IAI39 / ExPEC), this protein is Shikimate dehydrogenase (NADP(+)).